A 143-amino-acid chain; its full sequence is Ribosomal RNA large subunit methyltransferase H (143 aa).

Positions 68 and 95 each coordinate S-adenosyl-L-methionine.

Belongs to the RNA methyltransferase RlmH family. Homodimer.

It is found in the cytoplasm. It catalyses the reaction pseudouridine(1915) in 23S rRNA + S-adenosyl-L-methionine = N(3)-methylpseudouridine(1915) in 23S rRNA + S-adenosyl-L-homocysteine + H(+). Functionally, specifically methylates the pseudouridine at position 1915 (m3Psi1915) in 23S rRNA. In Mycoplasma mobile (strain ATCC 43663 / 163K / NCTC 11711) (Mesomycoplasma mobile), this protein is Ribosomal RNA large subunit methyltransferase H.